We begin with the raw amino-acid sequence, 341 residues long: MIKLNQIVKRYHTKDKDVLAVDHVDLNIESGSIFGVIGFSGAGKSTLIRMFNNLESPTSGEIIIDGDNISQLSKSQLRKKRQKVSMIFQHFNLLWSRSVLKNVTFPLEIAGVPSGLAKQKALELIELVGLKGRESAYPSELSGGQKQRVGIARALANDPDVLLCDEATSALDPQTTDEILDLLLKVREQQNLTIVLITHEMHVIRRICDEVAVMENGKVIEQGAVSKVFENPQHEVTKRFVKDDLNDDFEDSLEYLEPLDHDAYIVRLNFTGENTTEPIISYMTTTHNIDVNILEADIKNTKNGSFGFLVIHIPHISEEHFKQFKHNLHEQHVNVEVLKHG.

The 240-residue stretch at 2 to 241 (IKLNQIVKRY…PQHEVTKRFV (240 aa)) folds into the ABC transporter domain. ATP is bound at residue 38–45 (GFSGAGKS).

The protein belongs to the ABC transporter superfamily. Methionine importer (TC 3.A.1.24) family. As to quaternary structure, the complex is composed of two ATP-binding proteins (MetN), two transmembrane proteins (MetI) and a solute-binding protein (MetQ).

Its subcellular location is the cell membrane. It catalyses the reaction L-methionine(out) + ATP + H2O = L-methionine(in) + ADP + phosphate + H(+). The enzyme catalyses D-methionine(out) + ATP + H2O = D-methionine(in) + ADP + phosphate + H(+). Its function is as follows. Part of the ABC transporter complex MetNIQ involved in methionine import. Responsible for energy coupling to the transport system. The chain is Methionine import ATP-binding protein MetN 2 from Staphylococcus epidermidis (strain ATCC 35984 / DSM 28319 / BCRC 17069 / CCUG 31568 / BM 3577 / RP62A).